The following is a 379-amino-acid chain: Probable pectin lyase A (379 aa).

The N-terminal stretch at 1–19 (MKFALLSGVAAGLLPVVSA) is a signal peptide. 2 cysteine pairs are disulfide-bonded: cysteine 82-cysteine 101 and cysteine 91-cysteine 225. Residue arginine 255 is part of the active site. Cysteine 322 and cysteine 330 are oxidised to a cystine.

The protein belongs to the polysaccharide lyase 1 family.

It localises to the secreted. The catalysed reaction is Eliminative cleavage of (1-&gt;4)-alpha-D-galacturonan methyl ester to give oligosaccharides with 4-deoxy-6-O-methyl-alpha-D-galact-4-enuronosyl groups at their non-reducing ends.. In terms of biological role, pectinolytic enzymes consist of four classes of enzymes: pectin lyase, polygalacturonase, pectin methylesterase and rhamnogalacturonase. Among pectinolytic enzymes, pectin lyase is the most important in depolymerization of pectin, since it cleaves internal glycosidic bonds of highly methylated pectins. In Aspergillus oryzae (strain ATCC 42149 / RIB 40) (Yellow koji mold), this protein is Probable pectin lyase A (pelA).